Reading from the N-terminus, the 1196-residue chain is MKTFSSFFLSVTTLFFFSFFSLSFQASPSQSLYREIHQLISFKDVLPDKNLLPDWSSNKNPCTFDGVTCRDDKVTSIDLSSKPLNVGFSAVSSSLLSLTGLESLFLSNSHINGSVSGFKCSASLTSLDLSRNSLSGPVTTLTSLGSCSGLKFLNVSSNTLDFPGKVSGGLKLNSLEVLDLSANSISGANVVGWVLSDGCGELKHLAISGNKISGDVDVSRCVNLEFLDVSSNNFSTGIPFLGDCSALQHLDISGNKLSGDFSRAISTCTELKLLNISSNQFVGPIPPLPLKSLQYLSLAENKFTGEIPDFLSGACDTLTGLDLSGNHFYGAVPPFFGSCSLLESLALSSNNFSGELPMDTLLKMRGLKVLDLSFNEFSGELPESLTNLSASLLTLDLSSNNFSGPILPNLCQNPKNTLQELYLQNNGFTGKIPPTLSNCSELVSLHLSFNYLSGTIPSSLGSLSKLRDLKLWLNMLEGEIPQELMYVKTLETLILDFNDLTGEIPSGLSNCTNLNWISLSNNRLTGEIPKWIGRLENLAILKLSNNSFSGNIPAELGDCRSLIWLDLNTNLFNGTIPAAMFKQSGKIAANFIAGKRYVYIKNDGMKKECHGAGNLLEFQGIRSEQLNRLSTRNPCNITSRVYGGHTSPTFDNNGSMMFLDMSYNMLSGYIPKEIGSMPYLFILNLGHNDISGSIPDEVGDLRGLNILDLSSNKLDGRIPQAMSALTMLTEIDLSNNNLSGPIPEMGQFETFPPAKFLNNPGLCGYPLPRCDPSNADGYAHHQRSHGRRPASLAGSVAMGLLFSFVCIFGLILVGREMRKRRRKKEAELEMYAEGHGNSGDRTANNTNWKLTGVKEALSINLAAFEKPLRKLTFADLLQATNGFHNDSLIGSGGFGDVYKAILKDGSAVAIKKLIHVSGQGDREFMAEMETIGKIKHRNLVPLLGYCKVGDERLLVYEFMKYGSLEDVLHDPKKAGVKLNWSTRRKIAIGSARGLAFLHHNCSPHIIHRDMKSSNVLLDENLEARVSDFGMARLMSAMDTHLSVSTLAGTPGYVPPEYYQSFRCSTKGDVYSYGVVLLELLTGKRPTDSPDFGDNNLVGWVKQHAKLRISDVFDPELMKEDPALEIELLQHLKVAVACLDDRAWRRPTMVQVMAMFKEIQAGSGIDSQSTIRSIEDGGFSTIEMVDMSIKEVPEGKL.

The first 23 residues, 1 to 23 (MKTFSSFFLSVTTLFFFSFFSLS), serve as a signal peptide directing secretion. A Cys pair 1 motif is present at residues 62 to 69 (CTFDGVTC). LRR repeat units follow at residues 71-98 (DDKV…LLSL), 99-121 (TGLE…FKCS), 122-146 (ASLT…SLGS), 148-169 (SGLK…VSGG), 172-197 (LNSL…VLSD), 199-221 (CGEL…VSRC), 222-244 (VNLE…LGDC), 245-268 (SALQ…ISTC), 269-290 (TELK…PLPL), 291-314 (KSLQ…LSGA), 316-338 (DTLT…FFGS), 339-363 (CSLL…TLLK), 364-388 (MRGL…LTNL), 390-413 (ASLL…LCQN), 415-439 (KNTL…LSNC), 441-463 (ELVS…LGSL), 464-487 (SKLR…LMYV), 488-511 (KTLE…LSNC), 513-535 (NLNW…IGRL), 536-559 (ENLA…LGDC), and 561-583 (SLIW…MFKQ). An N-linked (GlcNAc...) asparagine glycan is attached at Asn-112. An N-linked (GlcNAc...) asparagine glycan is attached at Asn-154. A glycan (N-linked (GlcNAc...) asparagine) is linked at Asn-233. Asn-275 carries an N-linked (GlcNAc...) asparagine glycan. Residues Asn-351, Asn-387, Asn-401, and Asn-438 are each glycosylated (N-linked (GlcNAc...) asparagine). N-linked (GlcNAc...) asparagine glycosylation occurs at Asn-510. N-linked (GlcNAc...) asparagine glycans are attached at residues Asn-545 and Asn-573. Position 597 (Tyr-597) interacts with brassinolide. Residue Asn-636 is glycosylated (N-linked (GlcNAc...) asparagine). An SERK1 binding region spans residues 640-642 (RVY). Residues Tyr-642 and Ser-647 each coordinate brassinolide. Residue Asn-653 is glycosylated (N-linked (GlcNAc...) asparagine). LRR repeat units lie at residues 653 to 677 (NGSM…IGSM), 678 to 701 (PYLF…VGDL), 702 to 725 (RGLN…MSAL), and 727 to 750 (MLTE…QFET). A brassinolide-binding site is contributed by Asn-705. The segment at 726 to 729 (TMLT) is SERK1 binding. Residue Asn-737 is glycosylated (N-linked (GlcNAc...) asparagine). The interval 746–750 (GQFET) is SERK1 binding. The Cys pair 2 motif lies at 763–770 (CGYPLPRC). A helical membrane pass occupies residues 793 to 813 (AGSVAMGLLFSFVCIFGLILV). Tyr-831 bears the Phosphotyrosine mark. Ser-838 carries the phosphoserine modification. A phosphothreonine mark is found at Thr-842, Thr-846, and Thr-851. A Phosphoserine modification is found at Ser-858. Residues Thr-872 and Thr-880 each carry the phosphothreonine modification. In terms of domain architecture, Protein kinase spans 883-1158 (FHNDSLIGSG…VQVMAMFKEI (276 aa)). Phosphoserine is present on residues Ser-887 and Ser-891. ATP is bound by residues 889-897 (IGSGGFGDV) and Lys-911. Tyr-956 bears the Phosphotyrosine mark. ATP is bound by residues 957–959 (EFM) and 963–966 (SLED). Phosphoserine is present on Ser-981. Thr-982 is subject to Phosphothreonine. The active-site Proton acceptor is the Asp-1009. Residues 1009–1014 (DMKSSN) and Asp-1027 each bind ATP. Ser-1035 carries the post-translational modification Phosphoserine. Thr-1039 carries the post-translational modification Phosphothreonine. Phosphoserine is present on residues Ser-1042 and Ser-1044. Residues Thr-1045 and Thr-1049 each carry the phosphothreonine modification. A Phosphotyrosine modification is found at Tyr-1052. Position 1060 is a phosphoserine (Ser-1060). Tyr-1072 is subject to Phosphotyrosine. Ser-1166 and Ser-1168 each carry phosphoserine. Thr-1169 carries the post-translational modification Phosphothreonine. 2 positions are modified to phosphoserine: Ser-1172 and Ser-1179. Phosphothreonine is present on Thr-1180. Ser-1187 carries the post-translational modification Phosphoserine.

It belongs to the protein kinase superfamily. Ser/Thr protein kinase family. Monomer or homodimer in the plasma membrane. Heterodimer with BAK1 in the endosomes. Interacts with SERK1 and TTL in a kinase-dependent manner. Bind to SERK1 in a brassinolide-dependent manner. Component of the SERK1 signaling complex, composed of KAPP, CDC48A, GRF6 or GRF7, SERK1, SERK2, SERK3/BAK1 and BRI1. Interacts with CDG1. No interactions with PSKR1 or CNGC17. Interacts with BIK1. Interacts with B'ALPHA, B'BETA, B'GAMMA and B'ETA. Interacts with BSK1 and BSK3. Interacts with BSK5, BSK6 and BSK11. In terms of processing, autophosphorylated on Tyr-831, Tyr-956 and maybe Tyr-1072. Phosphorylated on at least 12 sites, with a preference for Ser residues. Transphosphorylated on Ser-887 by SERK1 and on Ser-838, Thr-846, Ser-858 and Ser-1166 by BAK1. Phosphorylation on Ser-1166 enhances the kinase activity. Glycosylated. In terms of tissue distribution, expressed ubiquitously.

The protein resides in the cell membrane. The protein localises to the endosome membrane. The catalysed reaction is L-seryl-[protein] + ATP = O-phospho-L-seryl-[protein] + ADP + H(+). It carries out the reaction L-threonyl-[protein] + ATP = O-phospho-L-threonyl-[protein] + ADP + H(+). It catalyses the reaction L-tyrosyl-[protein] + ATP = O-phospho-L-tyrosyl-[protein] + ADP + H(+). Its activity is regulated as follows. Activated by Ser and Thr phosphorylation. Functionally, receptor with a dual specificity kinase activity acting on both serine/threonine- and tyrosine-containing substrates. Regulates, in response to brassinosteroid binding, a signaling cascade involved in plant development, including expression of light- and stress-regulated genes, promotion of cell elongation, normal leaf and chloroplast senescence, and flowering. Binds brassinolide (BL), and less effectively castasterone (CS), but not 2,3,22,23-O-tetramethylbrassinolide or ecdysone. May be involved in a feedback regulation of brassinosteroid biosynthesis. Phosphorylates BRI1-associated receptor kinase 1 (BAK1), Transthyretin-Like protein (TTL) and SERK1 on 'Ser-299' and 'Thr-462' in vitro. May have a guanylyl cyclase activity. Phosphorylates BSK1, BSK2 and BSK3 in vitro. Phosphorylates BSK1, BSK3, BSK5, BSK6, BSK8 and BSK11 in vitro. The sequence is that of Protein BRASSINOSTEROID INSENSITIVE 1 from Arabidopsis thaliana (Mouse-ear cress).